The chain runs to 78 residues: uncharacterized protein (78 aa).

2 helical membrane passes run 12–32 and 51–71; these read LVSVMGMGMVFAFLLLLICVV and GVGAAVPAGGALAAAIAVAVH.

The protein localises to the cell membrane. This is an uncharacterized protein from Treponema pallidum (strain Nichols).